The sequence spans 196 residues: ATP-dependent Clp protease proteolytic subunit (196 aa).

Ser-96 serves as the catalytic Nucleophile. The active site involves His-121.

It belongs to the peptidase S14 family. As to quaternary structure, fourteen ClpP subunits assemble into 2 heptameric rings which stack back to back to give a disk-like structure with a central cavity, resembling the structure of eukaryotic proteasomes.

It is found in the cytoplasm. It carries out the reaction Hydrolysis of proteins to small peptides in the presence of ATP and magnesium. alpha-casein is the usual test substrate. In the absence of ATP, only oligopeptides shorter than five residues are hydrolyzed (such as succinyl-Leu-Tyr-|-NHMec, and Leu-Tyr-Leu-|-Tyr-Trp, in which cleavage of the -Tyr-|-Leu- and -Tyr-|-Trp bonds also occurs).. In terms of biological role, cleaves peptides in various proteins in a process that requires ATP hydrolysis. Has a chymotrypsin-like activity. Plays a major role in the degradation of misfolded proteins. The protein is ATP-dependent Clp protease proteolytic subunit of Streptococcus uberis (strain ATCC BAA-854 / 0140J).